The following is a 113-amino-acid chain: Endoribonuclease SymE (113 aa).

One can recognise a SpoVT-AbrB domain in the interval Ser29–Pro74.

The protein belongs to the SymE family.

The protein localises to the cytoplasm. Its function is as follows. Involved in the degradation and recycling of damaged RNA. It is itself a target for degradation by the ATP-dependent protease Lon. This chain is Endoribonuclease SymE, found in Escherichia coli (strain 55989 / EAEC).